We begin with the raw amino-acid sequence, 603 residues long: Geraniol synthase, chloroplastic (603 aa).

A chloroplast-targeting transit peptide spans 1-35; that stretch reads MSSISQKVVIGLNKAAANNNLQNLDRRGFKTRCVS. Residues Arg319, Asp356, Asp360, Arg497, and Asp500 each contribute to the (2E)-geranyl diphosphate site. Mg(2+) contacts are provided by Asp356 and Asp360. A DDXXD motif motif is present at residues 356-360; sequence DDVYD. Mg(2+) is bound by residues Asp500, Thr504, and Glu508.

The protein belongs to the terpene synthase family. Tpsb subfamily. As to quaternary structure, monomer. It depends on Mg(2+) as a cofactor. The cofactor is Mn(2+).

It localises to the plastid. The protein localises to the chloroplast. The enzyme catalyses (2E)-geranyl diphosphate + H2O = (2E)-geraniol + diphosphate. It participates in secondary metabolite biosynthesis; terpenoid biosynthesis. In terms of biological role, monoterpene synthase (mono-TPS) involved in the biosynthesis of monoterpenes natural products. Catalyzes the conversion of (2E)-geranyl diphosphate (GPP) into geraniol. The polypeptide is Geraniol synthase, chloroplastic (Perilla frutescens var. hirtella (Perilla citriodora)).